Consider the following 614-residue polypeptide: Dihydroxy-acid dehydratase (614 aa).

Residue Asp81 coordinates Mg(2+). Cys122 provides a ligand contact to [2Fe-2S] cluster. Residues Asp123 and Lys124 each coordinate Mg(2+). Lys124 carries the N6-carboxylysine modification. Cys193 lines the [2Fe-2S] cluster pocket. Position 489 (Glu489) interacts with Mg(2+). Catalysis depends on Ser515, which acts as the Proton acceptor.

Belongs to the IlvD/Edd family. In terms of assembly, homodimer. The cofactor is [2Fe-2S] cluster. Requires Mg(2+) as cofactor.

The enzyme catalyses (2R)-2,3-dihydroxy-3-methylbutanoate = 3-methyl-2-oxobutanoate + H2O. It carries out the reaction (2R,3R)-2,3-dihydroxy-3-methylpentanoate = (S)-3-methyl-2-oxopentanoate + H2O. Its pathway is amino-acid biosynthesis; L-isoleucine biosynthesis; L-isoleucine from 2-oxobutanoate: step 3/4. The protein operates within amino-acid biosynthesis; L-valine biosynthesis; L-valine from pyruvate: step 3/4. In terms of biological role, functions in the biosynthesis of branched-chain amino acids. Catalyzes the dehydration of (2R,3R)-2,3-dihydroxy-3-methylpentanoate (2,3-dihydroxy-3-methylvalerate) into 2-oxo-3-methylpentanoate (2-oxo-3-methylvalerate) and of (2R)-2,3-dihydroxy-3-methylbutanoate (2,3-dihydroxyisovalerate) into 2-oxo-3-methylbutanoate (2-oxoisovalerate), the penultimate precursor to L-isoleucine and L-valine, respectively. In Marinomonas sp. (strain MWYL1), this protein is Dihydroxy-acid dehydratase.